Here is a 436-residue protein sequence, read N- to C-terminus: tRNA(Ile)-lysidine synthase (436 aa).

ATP is bound at residue 25 to 30 (SGGLDS).

It belongs to the tRNA(Ile)-lysidine synthase family.

It is found in the cytoplasm. It catalyses the reaction cytidine(34) in tRNA(Ile2) + L-lysine + ATP = lysidine(34) in tRNA(Ile2) + AMP + diphosphate + H(+). Functionally, ligates lysine onto the cytidine present at position 34 of the AUA codon-specific tRNA(Ile) that contains the anticodon CAU, in an ATP-dependent manner. Cytidine is converted to lysidine, thus changing the amino acid specificity of the tRNA from methionine to isoleucine. The protein is tRNA(Ile)-lysidine synthase of Serratia proteamaculans (strain 568).